Consider the following 819-residue polypeptide: Protein O-mannosyl-transferase tmem260 (819 aa).

Polar residues predominate over residues 1–10; sequence MNNSPTLSNT. The tract at residues 1-68 is disordered; that stretch reads MNNSPTLSNT…NNNNNIINVN (68 aa). Over residues 15–68 the composition is skewed to low complexity; the sequence is NNNNNSNSNSNSNNNNNNNNNNNNNSNNNNNNNNNVNRNVNNRNNNNNNIINVN. N-linked (GlcNAc...) asparagine glycans are attached at residues asparagine 18, asparagine 38, and asparagine 70. The next 7 helical transmembrane spans lie at 113–133, 152–172, 185–205, 210–230, 232–252, 285–305, and 316–336; these read IACI…TQYP, VAHP…SHII, FMSS…VYLW, WCGL…MYQI, GEVF…GVWY, LTNQ…LMFI, and ILSN…LLFI. Asparagine 349 is a glycosylation site (N-linked (GlcNAc...) asparagine). A run of 4 helical transmembrane segments spans residues 391 to 411, 427 to 447, 459 to 479, and 505 to 525; these read LIIQ…LNLL, MIIF…NLPI, FFMQ…KSIF, and YLLP…NYNL. Asparagine 531, asparagine 686, asparagine 693, and asparagine 783 each carry an N-linked (GlcNAc...) asparagine glycan.

It belongs to the glycosyltransferase 117 (GT117) family.

The protein resides in the endoplasmic reticulum membrane. It catalyses the reaction a di-trans,poly-cis-dolichyl beta-D-mannosyl phosphate + L-seryl-[protein] = 3-O-(alpha-D-mannosyl)-L-seryl-[protein] + a di-trans,poly-cis-dolichyl phosphate + H(+). It carries out the reaction a di-trans,poly-cis-dolichyl beta-D-mannosyl phosphate + L-threonyl-[protein] = 3-O-(alpha-D-mannosyl)-L-threonyl-[protein] + a di-trans,poly-cis-dolichyl phosphate + H(+). O-mannosyl-transferase that transfers mannosyl residues to the hydroxyl group of serine or threonine residues of proteins. In Dictyostelium discoideum (Social amoeba), this protein is Protein O-mannosyl-transferase tmem260.